The primary structure comprises 461 residues: Lysosomal proton-coupled steroid conjugate and bile acid symporter SLC46A3 (461 aa).

The first 25 residues, 1 to 25 (MKISFIEPAILLYAFAMTLTIPLTA), serve as a signal peptide directing secretion. The Extracellular segment spans residues 26–70 (QYVYRRIWEETGNYTFTSSSNVSECEQNKSSSTFAFQEEVQKKAS). N-linked (GlcNAc...) asparagine glycosylation is found at Asn38, Asn46, and Asn53. The helical transmembrane segment at 71 to 91 (LFSLQVEISGLIPGLVSTFML) threads the bilayer. Topologically, residues 92–103 (LSSSDNHGRKLP) are cytoplasmic. The chain crosses the membrane as a helical span at residues 104-124 (MVLSSLGSLGTNLWLCAMSYF). The Extracellular portion of the chain corresponds to 125-135 (DLPLQLLVAST). A helical membrane pass occupies residues 136 to 156 (FIGALFGNYTTFWGACFAYIV). Topologically, residues 157-170 (DQEKEYKHRIIRIA) are cytoplasmic. Residues 171–191 (VLDFMLGVVTGLTGLSSGYFI) form a helical membrane-spanning segment. Residues 192–197 (RELGFA) lie on the Extracellular side of the membrane. The chain crosses the membrane as a helical span at residues 198–218 (WSYFIIAVVVLVNLAYILFFL). Topologically, residues 219–260 (SDPIKESSSQIVTMSCSESLKDLFYRTYMLFKNGSCKRRSLL) are cytoplasmic. A helical membrane pass occupies residues 261–281 (CLLIFTLVVYFFVVFGITPVF). At 282–301 (TLYELGPPLCWNEVYIGYGS) the chain is on the extracellular side. A helical transmembrane segment spans residues 302-322 (ALGSLSFLSSFLGIWLFSYCL). The Cytoplasmic portion of the chain corresponds to 323–324 (KD). The chain crosses the membrane as a helical span at residues 325–345 (IHIAYVGIFTTMVGMMLTAFT). The Extracellular portion of the chain corresponds to 346–347 (RT). Residues 348 to 368 (TLMMFLVRISFFFTIMPLSIL) form a helical membrane-spanning segment. Residues 369–381 (RSMLSKVVHSTEQ) are Cytoplasmic-facing. The chain crosses the membrane as a helical span at residues 382 to 402 (GVLFACIAFLETLGGVTSTSA). Residues 403 to 415 (YNGIYSATVAWYP) are Extracellular-facing. A helical membrane pass occupies residues 416–436 (GFVFLLSAGLLVLPAVSLCMV). Over 437–461 (KCIGWEEGSYTLLIHDEPSEHTSDS) the chain is Cytoplasmic. The Tyrosine-based lysosomal-sorting motif motif lies at 446–449 (YTLL).

Belongs to the major facilitator superfamily. SLC46A family.

The protein resides in the lysosome membrane. The catalysed reaction is estrone 3-sulfate(out) + n H(+)(out) = estrone 3-sulfate(in) + n H(+)(in). It catalyses the reaction 25-hydroxyvitamin D3 sulfate(out) + n H(+)(out) = 25-hydroxyvitamin D3 sulfate(in) + n H(+)(in). The enzyme catalyses cholate(out) + n H(+)(out) = cholate(in) + n H(+)(in). It carries out the reaction glycocholate(out) + n H(+)(out) = glycocholate(in) + n H(+)(in). The catalysed reaction is taurocholate(out) + n H(+)(out) = taurocholate(in) + n H(+)(in). It catalyses the reaction dehydroepiandrosterone 3-sulfate(out) + n H(+)(out) = dehydroepiandrosterone 3-sulfate(in) + n H(+)(in). The enzyme catalyses N-acetyl-D-muramoyl-L-alanyl-D-isoglutamine(out) + n H(+)(out) = N-acetyl-D-muramoyl-L-alanyl-D-isoglutamine(in) + n H(+)(in). It carries out the reaction 2',3'-cGAMP(out) + n H(+)(out) = 2',3'-cGAMP(in) + n H(+)(in). Its function is as follows. Lysosomal proton-coupled steroid conjugate and bile acid transporter. Preferentially recognizes lipophilic steroid conjugates or bile acis as endogenous substrates and seems to mediate escape from lysosomes to the cytoplasm. Modulates hepatic cytosolic copper homeostasis, maybe acting as a lysosomal copper transporter and sequestering copper ions in the lysosome. Delivers pathogen-associated molecular patterns to cytosolic pattern recognition receptors as part of the innate immune response to microbes. Selectively transports bacterial muramyl dipeptide (MDP) into the cytosol for recognition by NOD2, triggering inflammatory responses. Likely acts as a redundant importer of cyclic GMP-AMP dinucleotides (cGAMPs) in monocyte and macrophage cell lineages. The transport mechanism, its electrogenicity and stoichiometry remain to be elucidated. The sequence is that of Lysosomal proton-coupled steroid conjugate and bile acid symporter SLC46A3 (Slc46a3) from Rattus norvegicus (Rat).